The following is a 472-amino-acid chain: Glutamate synthase [NADPH] small chain (472 aa).

One can recognise a 4Fe-4S ferredoxin-type domain in the interval 41 to 72; it reads QDAAAQAHRCLHCGNPYCEWKCPVHNYIPNWL. [4Fe-4S] cluster-binding residues include C50, C53, C58, and C62.

[4Fe-4S] cluster is required as a cofactor.

It catalyses the reaction 2 L-glutamate + NADP(+) = L-glutamine + 2-oxoglutarate + NADPH + H(+). It functions in the pathway amino-acid biosynthesis; L-glutamate biosynthesis via GLT pathway; L-glutamate from 2-oxoglutarate and L-glutamine (NADP(+) route): step 1/1. The protein operates within energy metabolism; nitrogen metabolism. Its function is as follows. Catalyzes the conversion of L-glutamine and 2-oxoglutarate into two molecules of L-glutamate. This is Glutamate synthase [NADPH] small chain from Halomonas elongata (strain ATCC 33173 / DSM 2581 / NBRC 15536 / NCIMB 2198 / 1H9).